Reading from the N-terminus, the 786-residue chain is Ribosome biogenesis protein BOP1 homolog (786 aa).

Basic residues predominate over residues 1 to 11 (MAKKSAIKRKV). Residues 1–161 (MAKKSAIKRK…NSDTSDEEDI (161 aa)) are disordered. Residues 17–26 (INEQASVSEQ) are compositionally biased toward polar residues. Acidic residues-rich tracts occupy residues 44–53 (EDTTDDEGID), 60–72 (TSDD…DEEG), and 82–114 (SGED…DDAK). A compositionally biased stretch (polar residues) spans 122–135 (KATLSKTTGDSSNI). Residues 141–150 (PRRDPSKPEY) are compositionally biased toward basic and acidic residues. Over residues 151-160 (ENSDTSDEED) the composition is skewed to acidic residues. WD repeat units follow at residues 447-488 (GHTD…RTIE), 490-528 (NDVV…KLLV), 572-614 (THFK…SQIP), 617-655 (KSKG…LIKK), 658-697 (TNSK…KPYQ), 701-740 (LHRN…DLLQ), and 756-786 (RDEF…RLYT).

The protein belongs to the WD repeat BOP1/ERB1 family.

It is found in the nucleus. It localises to the nucleolus. The protein resides in the nucleoplasm. Functionally, required for maturation of ribosomal RNAs and formation of the large ribosomal subunit. The chain is Ribosome biogenesis protein BOP1 homolog from Drosophila grimshawi (Hawaiian fruit fly).